The chain runs to 416 residues: Adenylosuccinate synthetase (416 aa).

GTP contacts are provided by residues 12–18 (GDEGKGK) and 40–42 (GHT). Residue Asp-13 is the Proton acceptor of the active site. Mg(2+) contacts are provided by Asp-13 and Gly-40. IMP contacts are provided by residues 13–16 (DEGK), 38–41 (NAGH), Thr-125, Arg-139, Gln-219, Thr-234, and Arg-298. His-41 functions as the Proton donor in the catalytic mechanism. 294 to 300 (TVTGRKR) is a substrate binding site. GTP-binding positions include Arg-300, 326–328 (KLD), and 404–406 (STS).

This sequence belongs to the adenylosuccinate synthetase family. Homodimer. Requires Mg(2+) as cofactor.

It is found in the cytoplasm. It catalyses the reaction IMP + L-aspartate + GTP = N(6)-(1,2-dicarboxyethyl)-AMP + GDP + phosphate + 2 H(+). It participates in purine metabolism; AMP biosynthesis via de novo pathway; AMP from IMP: step 1/2. Its function is as follows. Plays an important role in the de novo pathway of purine nucleotide biosynthesis. Catalyzes the first committed step in the biosynthesis of AMP from IMP. This is Adenylosuccinate synthetase from Aliarcobacter butzleri (strain RM4018) (Arcobacter butzleri).